We begin with the raw amino-acid sequence, 310 residues long: Coproporphyrin III ferrochelatase (310 aa).

Residues Y13, R30, 46–47 (RY), S54, and Y125 each bind Fe-coproporphyrin III. Residues H181 and E262 each contribute to the Fe(2+) site.

It belongs to the ferrochelatase family.

It is found in the cytoplasm. It catalyses the reaction Fe-coproporphyrin III + 2 H(+) = coproporphyrin III + Fe(2+). It functions in the pathway porphyrin-containing compound metabolism; protoheme biosynthesis. Functionally, involved in coproporphyrin-dependent heme b biosynthesis. Catalyzes the insertion of ferrous iron into coproporphyrin III to form Fe-coproporphyrin III. The chain is Coproporphyrin III ferrochelatase from Halalkalibacterium halodurans (strain ATCC BAA-125 / DSM 18197 / FERM 7344 / JCM 9153 / C-125) (Bacillus halodurans).